The primary structure comprises 106 residues: UPF0642 protein YBL028C (106 aa).

The segment covering M1–N12 has biased composition (polar residues). Disordered stretches follow at residues M1–V21 and K52–F106. Residues D62–R72 show a composition bias toward basic and acidic residues. A compositionally biased stretch (basic residues) spans G83 to F106.

The protein belongs to the UPF0642 family.

The chain is UPF0642 protein YBL028C from Saccharomyces cerevisiae (strain ATCC 204508 / S288c) (Baker's yeast).